A 413-amino-acid polypeptide reads, in one-letter code: Aspartate aminotransferase, cytoplasmic (413 aa).

L-aspartate is bound by residues Gly-39 and Trp-141. Ser-149 is modified (phosphoserine). Asn-195 is a binding site for L-aspartate. Lys-259 carries the N6-(pyridoxal phosphate)lysine modification. Residue Arg-387 participates in L-aspartate binding.

It belongs to the class-I pyridoxal-phosphate-dependent aminotransferase family. Homodimer. Pyridoxal 5'-phosphate serves as cofactor.

It is found in the cytoplasm. It catalyses the reaction L-aspartate + 2-oxoglutarate = oxaloacetate + L-glutamate. It carries out the reaction L-cysteine + 2-oxoglutarate = 2-oxo-3-sulfanylpropanoate + L-glutamate. The catalysed reaction is (2S)-2-aminobutanoate + 2-oxoglutarate = 2-oxobutanoate + L-glutamate. The enzyme catalyses 3-sulfino-L-alanine + 2-oxoglutarate = 3-sulfinopyruvate + L-glutamate. Biosynthesis of L-glutamate from L-aspartate or L-cysteine. Important regulator of levels of glutamate, the major excitatory neurotransmitter of the vertebrate central nervous system. Acts as a scavenger of glutamate in brain neuroprotection. The aspartate aminotransferase activity is involved in hepatic glucose synthesis during development and in adipocyte glyceroneogenesis. Using L-cysteine as substrate, regulates levels of mercaptopyruvate, an important source of hydrogen sulfide. Mercaptopyruvate is converted into H(2)S via the action of 3-mercaptopyruvate sulfurtransferase (3MST). Hydrogen sulfide is an important synaptic modulator and neuroprotectant in the brain. This is Aspartate aminotransferase, cytoplasmic from Pongo abelii (Sumatran orangutan).